The chain runs to 142 residues: Large ribosomal subunit protein uL13 (142 aa).

The protein belongs to the universal ribosomal protein uL13 family. Part of the 50S ribosomal subunit.

In terms of biological role, this protein is one of the early assembly proteins of the 50S ribosomal subunit, although it is not seen to bind rRNA by itself. It is important during the early stages of 50S assembly. In Teredinibacter turnerae (strain ATCC 39867 / T7901), this protein is Large ribosomal subunit protein uL13.